The sequence spans 476 residues: Xylan O-acetyltransferase 4 (476 aa).

Residues 1–37 (MTKPQQQSPPSTTATTTTSPPPPPPSTPPPASSSSSS) form a disordered region. Residues 1-63 (MTKPQQQSPP…SLLSALRRSP (63 aa)) are Cytoplasmic-facing. The span at 8-18 (SPPSTTATTTT) shows a compositional bias: low complexity. Over residues 19-31 (SPPPPPPSTPPPA) the composition is skewed to pro residues. Residues 64 to 80 (VTTLVAAFFLLALFMYG) form a helical; Signal-anchor for type II membrane protein membrane-spanning segment. The Lumenal segment spans residues 81-476 (EDVRTLAELS…PSPHPPLPPQ (396 aa)). Residues Asn-103, Asn-128, and Asn-167 are each glycosylated (N-linked (GlcNAc...) asparagine). Cystine bridges form between Cys-117-Cys-168, Cys-139-Cys-204, Cys-148-Cys-444, and Cys-360-Cys-440. The GDS motif signature appears at 191–193 (GDS). Catalysis depends on Ser-193, which acts as the Nucleophile. Residues Asn-299 and Asn-369 are each glycosylated (N-linked (GlcNAc...) asparagine). Asp-439 acts as the Proton donor in catalysis. A DXXH motif motif is present at residues 439–442 (DCIH). His-442 acts as the Proton acceptor in catalysis.

This sequence belongs to the PC-esterase family. TBL subfamily. Highly expressed in leaves. Expressed in roots, stems and inflorescences.

It localises to the golgi apparatus membrane. Xylan acetyltransferase required for 2-O- and 3-O-monoacetylation of xylosyl residues in xylan. Catalyzes the 2-O-acetylation of xylan, followed by nonenzymatic acetyl migration to the O-3 position, resulting in products that are monoacetylated at both O-2 and O-3 positions. The protein is Xylan O-acetyltransferase 4 of Oryza sativa subsp. japonica (Rice).